We begin with the raw amino-acid sequence, 754 residues long: 5-methyltetrahydropteroyltriglutamate--homocysteine methyltransferase (754 aa).

5-methyltetrahydropteroyltri-L-glutamate contacts are provided by residues 17–20 (RELK) and K117. L-homocysteine contacts are provided by residues 431-433 (IGS) and E484. L-methionine contacts are provided by residues 431-433 (IGS) and E484. 5-methyltetrahydropteroyltri-L-glutamate is bound by residues 515–516 (RC) and W561. D599 is a binding site for L-homocysteine. L-methionine is bound at residue D599. E605 is a 5-methyltetrahydropteroyltri-L-glutamate binding site. H641, C643, and E665 together coordinate Zn(2+). H694 acts as the Proton donor in catalysis. Residue C726 coordinates Zn(2+).

Belongs to the vitamin-B12 independent methionine synthase family. Requires Zn(2+) as cofactor.

The enzyme catalyses 5-methyltetrahydropteroyltri-L-glutamate + L-homocysteine = tetrahydropteroyltri-L-glutamate + L-methionine. The protein operates within amino-acid biosynthesis; L-methionine biosynthesis via de novo pathway; L-methionine from L-homocysteine (MetE route): step 1/1. Its function is as follows. Catalyzes the transfer of a methyl group from 5-methyltetrahydrofolate to homocysteine resulting in methionine formation. The polypeptide is 5-methyltetrahydropteroyltriglutamate--homocysteine methyltransferase (Salmonella choleraesuis (strain SC-B67)).